The chain runs to 1349 residues: Zinc finger protein 804B (1349 aa).

Residues 55–79 (FYCELCDKQYHKHQEFDNHINSYDH) form a C2H2-type zinc finger. The interval 985–1010 (YASESRNDQDSAIPRTTEKDKSKSSH) is disordered.

This chain is Zinc finger protein 804B (ZNF804B), found in Homo sapiens (Human).